Consider the following 223-residue polypeptide: Deoxyribose-phosphate aldolase (223 aa).

The active-site Proton donor/acceptor is the aspartate 89. Lysine 152 serves as the catalytic Schiff-base intermediate with acetaldehyde. Residue lysine 181 is the Proton donor/acceptor of the active site.

The protein belongs to the DeoC/FbaB aldolase family. DeoC type 1 subfamily.

Its subcellular location is the cytoplasm. It carries out the reaction 2-deoxy-D-ribose 5-phosphate = D-glyceraldehyde 3-phosphate + acetaldehyde. It functions in the pathway carbohydrate degradation; 2-deoxy-D-ribose 1-phosphate degradation; D-glyceraldehyde 3-phosphate and acetaldehyde from 2-deoxy-alpha-D-ribose 1-phosphate: step 2/2. Its function is as follows. Catalyzes a reversible aldol reaction between acetaldehyde and D-glyceraldehyde 3-phosphate to generate 2-deoxy-D-ribose 5-phosphate. This Listeria welshimeri serovar 6b (strain ATCC 35897 / DSM 20650 / CCUG 15529 / CIP 8149 / NCTC 11857 / SLCC 5334 / V8) protein is Deoxyribose-phosphate aldolase.